Here is a 545-residue protein sequence, read N- to C-terminus: Resolvase homolog YokA (545 aa).

The Resolvase/invertase-type recombinase catalytic domain maps to asparagine 14–glycine 165. Residues leucine 19–lysine 46 adopt a coiled-coil conformation. Serine 22 acts as the O-(5'-phospho-DNA)-serine intermediate in catalysis. Residues proline 173–leucine 303 constitute a DNA-binding region (recombinase). The stretch at asparagine 402–asparagine 475 forms a coiled coil.

It in the N-terminal section; belongs to the site-specific recombinase resolvase family.

The sequence is that of Resolvase homolog YokA (yokA) from Bacillus subtilis (strain 168).